The following is a 249-amino-acid chain: GTP cyclohydrolase III (249 aa).

This sequence belongs to the archaeal-type GTP cyclohydrolase family.

The catalysed reaction is GTP + 3 H2O = 2-amino-5-formylamino-6-(5-phospho-D-ribosylamino)pyrimidin-4(3H)-one + 2 phosphate + 2 H(+). Catalyzes the formation of 2-amino-5-formylamino-6-ribofuranosylamino-4(3H)-pyrimidinone ribonucleotide monophosphate and inorganic phosphate from GTP. Also has an independent pyrophosphate phosphohydrolase activity. This Methanothermobacter thermautotrophicus (strain ATCC 29096 / DSM 1053 / JCM 10044 / NBRC 100330 / Delta H) (Methanobacterium thermoautotrophicum) protein is GTP cyclohydrolase III.